The primary structure comprises 218 residues: Histone H1 (218 aa).

2 stretches are compositionally biased toward low complexity: residues 1–19 (MSET…GAKA) and 27–39 (AAGG…PAGP). 2 disordered regions span residues 1-41 (MSET…GPSV) and 89-218 (VGKG…PKKK). Position 2 is an N-acetylserine (Ser2). Residues 37–110 (AGPSVTELIT…GASGSFKLNK (74 aa)) enclose the H15 domain. 4 stretches are compositionally biased toward basic residues: residues 119–133 (ATKK…KPAA), 141–158 (KKPK…KAKK), 166–184 (KAAK…KKAA), and 191–218 (KAVK…PKKK).

Belongs to the histone H1/H5 family.

It localises to the nucleus. The protein localises to the chromosome. Functionally, histones H1 are necessary for the condensation of nucleosome chains into higher-order structures. The polypeptide is Histone H1 (Anas platyrhynchos (Mallard)).